The sequence spans 128 residues: LQDGAYHEVDSSEMAFKIAGSMAFKEAARKAYAVILEPLMAVEVTTPEDYMGDVIGDLKGPRRQIRAMDERAGARVVQALVTLLDIFGYVGDLRSKTQGRASFSMQFDSYAEVPQHIAKKIVAKVRAQ.

Belongs to the GTP-binding elongation factor family. EF-G/EF-2 subfamily.

The protein localises to the cytoplasm. Catalyzes the GTP-dependent ribosomal translocation step during translation elongation. During this step, the ribosome changes from the pre-translocational (PRE) to the post-translocational (POST) state as the newly formed A-site-bound peptidyl-tRNA and P-site-bound deacylated tRNA move to the P and E sites, respectively. Catalyzes the coordinated movement of the two tRNA molecules, the mRNA and conformational changes in the ribosome. This is Elongation factor G (fusA) from Planobispora rosea.